The sequence spans 353 residues: DNA replication and repair protein RecF (353 aa).

30 to 37 (GANGQGKT) is a binding site for ATP.

Belongs to the RecF family.

The protein localises to the cytoplasm. Its function is as follows. The RecF protein is involved in DNA metabolism; it is required for DNA replication and normal SOS inducibility. RecF binds preferentially to single-stranded, linear DNA. It also seems to bind ATP. The chain is DNA replication and repair protein RecF from Carboxydothermus hydrogenoformans (strain ATCC BAA-161 / DSM 6008 / Z-2901).